The following is a 98-amino-acid chain: Aspartyl/glutamyl-tRNA(Asn/Gln) amidotransferase subunit C (98 aa).

A disordered region spans residues E75–A98.

This sequence belongs to the GatC family. Heterotrimer of A, B and C subunits.

It catalyses the reaction L-glutamyl-tRNA(Gln) + L-glutamine + ATP + H2O = L-glutaminyl-tRNA(Gln) + L-glutamate + ADP + phosphate + H(+). The enzyme catalyses L-aspartyl-tRNA(Asn) + L-glutamine + ATP + H2O = L-asparaginyl-tRNA(Asn) + L-glutamate + ADP + phosphate + 2 H(+). In terms of biological role, allows the formation of correctly charged Asn-tRNA(Asn) or Gln-tRNA(Gln) through the transamidation of misacylated Asp-tRNA(Asn) or Glu-tRNA(Gln) in organisms which lack either or both of asparaginyl-tRNA or glutaminyl-tRNA synthetases. The reaction takes place in the presence of glutamine and ATP through an activated phospho-Asp-tRNA(Asn) or phospho-Glu-tRNA(Gln). The protein is Aspartyl/glutamyl-tRNA(Asn/Gln) amidotransferase subunit C of Pseudarthrobacter chlorophenolicus (strain ATCC 700700 / DSM 12829 / CIP 107037 / JCM 12360 / KCTC 9906 / NCIMB 13794 / A6) (Arthrobacter chlorophenolicus).